The chain runs to 49 residues: Large ribosomal subunit protein bL33C (49 aa).

The protein belongs to the bacterial ribosomal protein bL33 family.

This chain is Large ribosomal subunit protein bL33C, found in Bacillus pumilus (strain SAFR-032).